A 920-amino-acid polypeptide reads, in one-letter code: DNA ligase (920 aa).

NAD(+)-binding positions include 90-94 (DAAYD), 139-140 (SL), and Glu-173. Catalysis depends on Lys-175, which acts as the N6-AMP-lysine intermediate. NAD(+) contacts are provided by Arg-196, Glu-235, Lys-360, and Lys-384. 4 residues coordinate Zn(2+): Cys-481, Cys-484, Cys-500, and Cys-506. Residues 659–691 (RAQGEAAIESAETQGDTASETTGAPTGAEAPLG) are disordered. Positions 669–682 (AETQGDTASETTGA) are enriched in polar residues. One can recognise a BRCT domain in the interval 839–920 (SLPQTLAGKT…FAQLLATGTI (82 aa)).

This sequence belongs to the NAD-dependent DNA ligase family. LigA subfamily. Requires Mg(2+) as cofactor. The cofactor is Mn(2+).

The catalysed reaction is NAD(+) + (deoxyribonucleotide)n-3'-hydroxyl + 5'-phospho-(deoxyribonucleotide)m = (deoxyribonucleotide)n+m + AMP + beta-nicotinamide D-nucleotide.. Functionally, DNA ligase that catalyzes the formation of phosphodiester linkages between 5'-phosphoryl and 3'-hydroxyl groups in double-stranded DNA using NAD as a coenzyme and as the energy source for the reaction. It is essential for DNA replication and repair of damaged DNA. The chain is DNA ligase from Bifidobacterium longum (strain NCC 2705).